The following is a 324-amino-acid chain: Elongation factor P--(R)-beta-lysine ligase (324 aa).

75–77 (SPE) lines the substrate pocket. ATP is bound by residues 99-101 (RNK) and Asn108. Tyr117 is a substrate binding site. ATP is bound at residue 243 to 244 (EL). Glu250 contacts substrate. Gly299 contacts ATP.

The protein belongs to the class-II aminoacyl-tRNA synthetase family. EpmA subfamily. As to quaternary structure, homodimer.

It catalyses the reaction D-beta-lysine + L-lysyl-[protein] + ATP = N(6)-((3R)-3,6-diaminohexanoyl)-L-lysyl-[protein] + AMP + diphosphate + H(+). Functionally, with EpmB is involved in the beta-lysylation step of the post-translational modification of translation elongation factor P (EF-P). Catalyzes the ATP-dependent activation of (R)-beta-lysine produced by EpmB, forming a lysyl-adenylate, from which the beta-lysyl moiety is then transferred to the epsilon-amino group of a conserved specific lysine residue in EF-P. The sequence is that of Elongation factor P--(R)-beta-lysine ligase from Buchnera aphidicola subsp. Acyrthosiphon pisum (strain APS) (Acyrthosiphon pisum symbiotic bacterium).